A 104-amino-acid chain; its full sequence is Large ribosomal subunit protein uL23 (104 aa).

Belongs to the universal ribosomal protein uL23 family. In terms of assembly, part of the 50S ribosomal subunit. Contacts protein L29, and trigger factor when it is bound to the ribosome.

Its function is as follows. One of the early assembly proteins it binds 23S rRNA. One of the proteins that surrounds the polypeptide exit tunnel on the outside of the ribosome. Forms the main docking site for trigger factor binding to the ribosome. This chain is Large ribosomal subunit protein uL23, found in Ralstonia nicotianae (strain ATCC BAA-1114 / GMI1000) (Ralstonia solanacearum).